We begin with the raw amino-acid sequence, 512 residues long: Allene oxide synthase 1, chloroplastic (512 aa).

A chloroplast-targeting transit peptide spans 1–25 (MATAAACISFASPSPARVVIRRQTR). The interval 23-43 (QTRASASASATDRQEVVSPKR) is disordered. Residues Lys127, His158, and Lys162 each coordinate heme b. Asn315 is a binding site for (13S)-hydroperoxy-(9Z,11E,15Z)-octadecatrienoate. Heme b-binding residues include Lys463 and Cys465.

It belongs to the cytochrome P450 family. Requires heme b as cofactor. Expressed in coleoptiles, and at lower level in leaves of dark-grown seedlings.

It localises to the plastid. The protein localises to the chloroplast membrane. The catalysed reaction is (13S)-hydroperoxy-(9Z,11E,15Z)-octadecatrienoate = (9Z,13S,15Z)-12,13-epoxyoctadeca-9,11,15-trienoate + H2O. The protein operates within lipid metabolism; oxylipin biosynthesis. In terms of biological role, involved in the biosynthesis of jasmonic acid, a growth regulator that is implicated also as a signaling molecule in plant defense. Converts 13-hydroperoxylinolenic acid to 12,13-epoxylinolenic acid. This chain is Allene oxide synthase 1, chloroplastic (CYP74A1), found in Oryza sativa subsp. japonica (Rice).